The primary structure comprises 359 residues: MAP kinase-activated protein kinase 2 (359 aa).

In terms of domain architecture, Protein kinase spans 20–281; the sequence is VTSNTVLGYG…IQDVISNKWI (262 aa). ATP-binding positions include 26–34 and K49; that span reads LGYGINGKV. The Proton acceptor role is filled by D142.

This sequence belongs to the protein kinase superfamily. CAMK Ser/Thr protein kinase family. Post-translationally, phosphorylated and activated by MAP kinase.

The catalysed reaction is L-seryl-[protein] + ATP = O-phospho-L-seryl-[protein] + ADP + H(+). The enzyme catalyses L-threonyl-[protein] + ATP = O-phospho-L-threonyl-[protein] + ADP + H(+). In terms of biological role, its physiological substrate seems to be the small heat shock protein (HSP27/HSP25). The protein is MAP kinase-activated protein kinase 2 (MAPk-Ak2) of Drosophila melanogaster (Fruit fly).